Here is a 284-residue protein sequence, read N- to C-terminus: 2-dehydro-3-deoxyphosphooctonate aldolase (284 aa).

Belongs to the KdsA family.

The protein resides in the cytoplasm. The enzyme catalyses D-arabinose 5-phosphate + phosphoenolpyruvate + H2O = 3-deoxy-alpha-D-manno-2-octulosonate-8-phosphate + phosphate. Its pathway is carbohydrate biosynthesis; 3-deoxy-D-manno-octulosonate biosynthesis; 3-deoxy-D-manno-octulosonate from D-ribulose 5-phosphate: step 2/3. It participates in bacterial outer membrane biogenesis; lipopolysaccharide biosynthesis. The polypeptide is 2-dehydro-3-deoxyphosphooctonate aldolase (Enterobacter sp. (strain 638)).